Consider the following 333-residue polypeptide: Holliday junction branch migration complex subunit RuvB (333 aa).

A large ATPase domain (RuvB-L) region spans residues 1–181 (MTRILDNDLI…FGITGHMEYY (181 aa)). Residues L20, R21, G62, K65, T66, T67, 128–130 (EDF), R171, Y181, and R218 each bind ATP. T66 provides a ligand contact to Mg(2+). Positions 182–252 (QTADLTEIVE…ITDKALTMLD (71 aa)) are small ATPAse domain (RuvB-S). The tract at residues 255 to 333 (QEGLDYVDQK…HLGYPYEKKH (79 aa)) is head domain (RuvB-H). DNA-binding residues include R291, R310, R312, and R315.

Belongs to the RuvB family. As to quaternary structure, homohexamer. Forms an RuvA(8)-RuvB(12)-Holliday junction (HJ) complex. HJ DNA is sandwiched between 2 RuvA tetramers; dsDNA enters through RuvA and exits via RuvB. An RuvB hexamer assembles on each DNA strand where it exits the tetramer. Each RuvB hexamer is contacted by two RuvA subunits (via domain III) on 2 adjacent RuvB subunits; this complex drives branch migration. In the full resolvosome a probable DNA-RuvA(4)-RuvB(12)-RuvC(2) complex forms which resolves the HJ.

It localises to the cytoplasm. The catalysed reaction is ATP + H2O = ADP + phosphate + H(+). Its function is as follows. The RuvA-RuvB-RuvC complex processes Holliday junction (HJ) DNA during genetic recombination and DNA repair, while the RuvA-RuvB complex plays an important role in the rescue of blocked DNA replication forks via replication fork reversal (RFR). RuvA specifically binds to HJ cruciform DNA, conferring on it an open structure. The RuvB hexamer acts as an ATP-dependent pump, pulling dsDNA into and through the RuvAB complex. RuvB forms 2 homohexamers on either side of HJ DNA bound by 1 or 2 RuvA tetramers; 4 subunits per hexamer contact DNA at a time. Coordinated motions by a converter formed by DNA-disengaged RuvB subunits stimulates ATP hydrolysis and nucleotide exchange. Immobilization of the converter enables RuvB to convert the ATP-contained energy into a lever motion, pulling 2 nucleotides of DNA out of the RuvA tetramer per ATP hydrolyzed, thus driving DNA branch migration. The RuvB motors rotate together with the DNA substrate, which together with the progressing nucleotide cycle form the mechanistic basis for DNA recombination by continuous HJ branch migration. Branch migration allows RuvC to scan DNA until it finds its consensus sequence, where it cleaves and resolves cruciform DNA. This is Holliday junction branch migration complex subunit RuvB from Streptococcus equi subsp. zooepidemicus (strain MGCS10565).